The chain runs to 1905 residues: Microtubule cross-linking factor 1 (1905 aa).

Residues 1–249 are necessary for colocalization and binding with microtubules; the sequence is METLNGPAGG…SSDREPPRGA (249 aa). Residues 1-329 are disordered; it reads METLNGPAGG…SLGEQSRLVP (329 aa). The segment at 1-508 is necessary for self-assembly, microtubule bundling activity and apicobasal microtubule organization; the sequence is METLNGPAGG…QDDSADLRCQ (508 aa). Residues 22 to 40 are compositionally biased toward basic residues; that stretch reads QHHRHHHLHPVAERRRLHR. 2 stretches are compositionally biased toward low complexity: residues 63 to 95 and 115 to 130; these read VPSSGRAPAPAAPRSPNLAGKAPPSPGSLAAPG and AGARAAGGAKAALGSR. Residues S77 and S87 each carry the phosphoserine modification. A phosphoserine mark is found at S217, S221, and S263. Residues 268–283 show a composition bias toward low complexity; that stretch reads ALLAAPLAAGACPGGR. 3 coiled-coil regions span residues 330-404, 432-483, and 513-718; these read AAEE…EQKS, SVRL…SSLK, and KEEA…LQHE. 5 disordered regions span residues 544–563, 601–631, 671–694, 737–800, and 842–867; these read YGDVDSPLPTGEAGGPPSTR, DMRGQQEREGPGRDHAPSIPTSPFGDSLESS, FEPPREPGWLGEGASPGAGGGAPL, LRAP…SEPC, and AGLRGGAPLPGPGLQGEEEQGEGDQQ. Phosphoserine is present on S549. A compositionally biased stretch (basic and acidic residues) spans 601–616; sequence DMRGQQEREGPGRDHA. S618 is subject to Phosphoserine. T621 bears the Phosphothreonine mark. Over residues 680–692 the composition is skewed to gly residues; sequence LGEGASPGAGGGA. S685 is subject to Phosphoserine. The span at 741–770 shows a compositional bias: basic and acidic residues; sequence SPRDSDAESDAGKKESDGEESRLPQPKREG. At S776 the chain carries Phosphoserine. The span at 857-866 shows a compositional bias: acidic residues; that stretch reads GEEEQGEGDQ. A phosphoserine mark is found at S901, S923, K941, and T975. The segment at 1080–1100 is disordered; the sequence is GVQGGHQADGPDHDSDRGCGF. 2 coiled-coil regions span residues 1143–1201 and 1238–1278; these read KALL…ELGS and EKNW…KENS. The segment at 1265–1382 is necessary for interaction with MARK2 and apicobasal microtubule bundle formation in polarized epithelial cells; that stretch reads EFLWRIEQLQ…EENHKGNLQR (118 aa). Residue S1278 is modified to Phosphoserine. The segment at 1346–1384 is disordered; that stretch reads ALSLDDEPEEPPAHRPEREFRNRLPEEEENHKGNLQRAV. The segment covering 1356-1377 has biased composition (basic and acidic residues); the sequence is PPAHRPEREFRNRLPEEEENHK. A phosphoserine mark is found at S1385, S1388, and S1399. A Phosphothreonine modification is found at T1417. S1421 bears the Phosphoserine mark. A Phosphotyrosine modification is found at Y1427. The tract at residues 1485–1505 is disordered; sequence DTMTSPEHCQKQPLRSHVLTE. A phosphoserine mark is found at S1514, S1523, S1561, S1578, S1583, S1592, and S1661. Residues 1524 to 1569 are disordered; that stretch reads ITAAGGEGPFPTSRARGSPGDTKGGPPEPMLSRWPCTSPRHSRDYV. 4 disordered regions span residues 1655-1689, 1707-1756, 1782-1842, and 1863-1905; these read GSGVTSSPHKCLTPKAGGGATPVSSPSRSLRSRQV, PKYG…PVHT, GLRA…APPG, and KEER…PWGL. Phosphothreonine occurs at positions 1667 and 1675. A compositionally biased stretch (low complexity) spans 1678–1687; sequence SSPSRSLRSR. The tract at residues 1678 to 1773 is necessary for colocalization and binding with microtubules; that stretch reads SSPSRSLRSR…SLFNIIDHSP (96 aa). Residues S1679 and S1683 each carry the phosphoserine modification. Positions 1744–1756 are enriched in polar residues; that stretch reads ARSTTTRESPVHT. S1791, S1808, S1812, and S1814 each carry phosphoserine.

This sequence belongs to the SOGA family. In terms of assembly, homodimer. Associates (via N- and C-terminus domains) with microtubule filaments. As to quaternary structure, interacts with MARK2; the interaction is direct. In terms of processing, phosphorylated during mitosis in a CDK1-dependent manner.

It localises to the lateral cell membrane. It is found in the apical cell membrane. The protein resides in the cytoplasm. The protein localises to the cytoskeleton. Its subcellular location is the spindle pole. It localises to the midbody. Microtubule-associated factor involved in the late phase of epithelial polarization and microtubule dynamics regulation. Plays a role in the development and maintenance of non-centrosomal microtubule bundles at the lateral membrane in polarized epithelial cells. Required for faithful chromosome segregation during mitosis. This is Microtubule cross-linking factor 1 (MTCL1) from Homo sapiens (Human).